A 158-amino-acid polypeptide reads, in one-letter code: Transcription elongation factor GreA (158 aa).

It belongs to the GreA/GreB family.

Necessary for efficient RNA polymerase transcription elongation past template-encoded arresting sites. The arresting sites in DNA have the property of trapping a certain fraction of elongating RNA polymerases that pass through, resulting in locked ternary complexes. Cleavage of the nascent transcript by cleavage factors such as GreA or GreB allows the resumption of elongation from the new 3'terminus. GreA releases sequences of 2 to 3 nucleotides. This chain is Transcription elongation factor GreA, found in Methylobacterium nodulans (strain LMG 21967 / CNCM I-2342 / ORS 2060).